The chain runs to 375 residues: Trichodiene synthase (375 aa).

The protein belongs to the trichodiene synthase family.

The enzyme catalyses (2E,6E)-farnesyl diphosphate = trichodiene + diphosphate. It participates in sesquiterpene biosynthesis; trichothecene biosynthesis. TS is a member of the terpene cyclase group of enzymes. It catalyzes the isomerization and cyclization of farnesyl pyro-phosphate to form trichodiene, the first cyclic intermediate in the biosynthetic pathway for trichothecenes. It serves to branch trichothecene biosynthesis from the isoprenoid pathway. The polypeptide is Trichodiene synthase (TRI5) (Fusarium austroamericanum).